The sequence spans 214 residues: ATP phosphoribosyltransferase (214 aa).

The protein belongs to the ATP phosphoribosyltransferase family. Short subfamily. In terms of assembly, heteromultimer composed of HisG and HisZ subunits.

It localises to the cytoplasm. It catalyses the reaction 1-(5-phospho-beta-D-ribosyl)-ATP + diphosphate = 5-phospho-alpha-D-ribose 1-diphosphate + ATP. It participates in amino-acid biosynthesis; L-histidine biosynthesis; L-histidine from 5-phospho-alpha-D-ribose 1-diphosphate: step 1/9. In terms of biological role, catalyzes the condensation of ATP and 5-phosphoribose 1-diphosphate to form N'-(5'-phosphoribosyl)-ATP (PR-ATP). Has a crucial role in the pathway because the rate of histidine biosynthesis seems to be controlled primarily by regulation of HisG enzymatic activity. The sequence is that of ATP phosphoribosyltransferase from Leptothrix cholodnii (strain ATCC 51168 / LMG 8142 / SP-6) (Leptothrix discophora (strain SP-6)).